Here is a 138-residue protein sequence, read N- to C-terminus: Acidic phospholipase A2 (138 aa).

The first 16 residues, 1-16 (MRTLWIVAVLLLGVEG), serve as a signal peptide directing secretion. 7 disulfide bridges follow: cysteine 42/cysteine 131, cysteine 44/cysteine 60, cysteine 59/cysteine 111, cysteine 65/cysteine 138, cysteine 66/cysteine 104, cysteine 73/cysteine 97, and cysteine 91/cysteine 102. Residues tyrosine 43, glycine 45, and glycine 47 each contribute to the Ca(2+) site. Histidine 63 is a catalytic residue. Aspartate 64 lines the Ca(2+) pocket. The active site involves aspartate 105.

Belongs to the phospholipase A2 family. Group II subfamily. D49 sub-subfamily. In terms of assembly, homodimer. The cofactor is Ca(2+). Expressed by the venom gland.

The protein resides in the secreted. The catalysed reaction is a 1,2-diacyl-sn-glycero-3-phosphocholine + H2O = a 1-acyl-sn-glycero-3-phosphocholine + a fatty acid + H(+). PLA2 catalyzes the calcium-dependent hydrolysis of the 2-acyl groups in 3-sn-phosphoglycerides. The chain is Acidic phospholipase A2 from Crotalus atrox (Western diamondback rattlesnake).